Reading from the N-terminus, the 248-residue chain is UPF0273 protein APE_1505.1 (248 aa).

The KaiC domain maps to 3 to 247 (DRVKTGIPGM…VVRIGRRVSI (245 aa)). 30-37 (GGPGTGKS) is a binding site for ATP.

Belongs to the UPF0273 family.

This Aeropyrum pernix (strain ATCC 700893 / DSM 11879 / JCM 9820 / NBRC 100138 / K1) protein is UPF0273 protein APE_1505.1.